A 225-amino-acid chain; its full sequence is Doublesex- and mab-3-related transcription factor C1 (225 aa).

Basic and acidic residues predominate over residues 1 to 12 (MQRPSGSREVRK). 2 disordered regions span residues 1–49 (MQRP…SHVH) and 179–216 (QTRHQPCGMPGTAGERGLQLPNPSMPPRPASSGSLPSG). The span at 27–37 (RVKKHVVRRQK) shows a compositional bias: basic residues.

The protein belongs to the DMRT family.

The sequence is that of Doublesex- and mab-3-related transcription factor C1 (Dmrtc1) from Rattus norvegicus (Rat).